The primary structure comprises 989 residues: Translation initiation factor IF-2 (989 aa).

Disordered stretches follow at residues 43 to 219 and 234 to 379; these read KRRR…LQAR and EARR…GGAR. Polar residues predominate over residues 72 to 87; sequence NTPNKDTAVTQTATKN. The segment covering 105–146 has biased composition (low complexity); the sequence is PKPVAAEATAQETSKAAPAAAQPVAEKEAAAPASAEAAKSAA. Residues 149-159 show a composition bias toward basic and acidic residues; sequence VTDRGAKKTTE. Residues 160–171 are compositionally biased toward polar residues; sequence KNGANASGNRPS. Positions 234 to 293 are enriched in basic and acidic residues; it reads EARRREDRLKQEADLEEQRRIEEKRRLEAEAKVEAEKQAALKEKEKAEAKARAKAEKEAK. Residues 294–303 show a composition bias toward low complexity; that stretch reads AAQAKTAGAA. Basic and acidic residues predominate over residues 342-361; that stretch reads PRREAPRPAMRDRKGEDRRQ. In terms of domain architecture, tr-type G spans 489–659; the sequence is SRPPVVTIMG…LLQAEMLELK (171 aa). The G1 stretch occupies residues 498 to 505; it reads GHVDHGKT. 498–505 contacts GTP; it reads GHVDHGKT. The tract at residues 523–527 is G2; sequence GITQH. Residues 545–548 are G3; the sequence is DTPG. Residues 545 to 549 and 599 to 602 each bind GTP; these read DTPGH and NKMD. Positions 599–602 are G4; it reads NKMD. Residues 635–637 are G5; that stretch reads SAA.

This sequence belongs to the TRAFAC class translation factor GTPase superfamily. Classic translation factor GTPase family. IF-2 subfamily.

The protein localises to the cytoplasm. Its function is as follows. One of the essential components for the initiation of protein synthesis. Protects formylmethionyl-tRNA from spontaneous hydrolysis and promotes its binding to the 30S ribosomal subunits. Also involved in the hydrolysis of GTP during the formation of the 70S ribosomal complex. The sequence is that of Translation initiation factor IF-2 from Zymomonas mobilis subsp. mobilis (strain ATCC 31821 / ZM4 / CP4).